The primary structure comprises 73 residues: UPF0352 protein HD_1515 (73 aa).

The protein belongs to the UPF0352 family.

This chain is UPF0352 protein HD_1515, found in Haemophilus ducreyi (strain 35000HP / ATCC 700724).